A 265-amino-acid chain; its full sequence is Exosome complex component RRP42 (265 aa).

This sequence belongs to the RNase PH family. Component of the RNA exosome complex. Specifically part of the catalytically inactive RNA exosome core complex (Exo-9) which may associate with the catalytic subunits RRP6 and DIS3 in cytoplasmic- and nuclear-specific RNA exosome complex forms. Exo-9 is formed by a hexameric base ring of RNase PH domain-containing subunits and a cap ring consisting of CSL4, RRP4 and RRP40.

The protein resides in the cytoplasm. It localises to the nucleus. It is found in the nucleolus. Non-catalytic component of the RNA exosome complex which has 3'-&gt;5' exoribonuclease activity and participates in a multitude of cellular RNA processing and degradation events. In the nucleus, the RNA exosome complex is involved in proper maturation of stable RNA species such as rRNA, snRNA and snoRNA, in the elimination of RNA processing by-products and non-coding 'pervasive' transcripts, such as antisense RNA species and cryptic unstable transcripts (CUTs), and of mRNAs with processing defects, thereby limiting or excluding their export to the cytoplasm. In the cytoplasm, the RNA exosome complex is involved in general mRNA turnover and in RNA surveillance pathways, preventing translation of aberrant mRNAs. The catalytic inactive RNA exosome core complex of 9 subunits (Exo-9) is proposed to play a pivotal role in the binding and presentation of RNA for ribonucleolysis, and to serve as a scaffold for the association with catalytic subunits and accessory proteins or complexes. RRP42 is part of the hexameric ring of RNase PH domain-containing subunits proposed to form a central channel which threads RNA substrates for degradation. The polypeptide is Exosome complex component RRP42 (RRP42) (Saccharomyces cerevisiae (strain ATCC 204508 / S288c) (Baker's yeast)).